The following is a 253-amino-acid chain: Major prion protein (253 aa).

The N-terminal stretch at 1 to 22 (MANLGCWMLVLFVATWSDLGLC) is a signal peptide. The tract at residues 23–230 (KKRPKPGGWN…ESQAYYQRGS (208 aa)) is interaction with GRB2, ERI3 and SYN1. The disordered stretch occupies residues 26 to 108 (PKPGGWNTGG…WNKPSKPKTS (83 aa)). A run of 5 repeats spans residues 51-59 (PQGGGGWGQ), 60-67 (PHGGGWGQ), 68-75 (PHGGGWGQ), 76-83 (PHGGGWGQ), and 84-91 (PHGGGWGQ). Positions 51–91 (PQGGGGWGQPHGGGWGQPHGGGWGQPHGGGWGQPHGGGWGQ) are 5 X 8 AA tandem repeats of P-H-G-G-G-W-G-Q. The segment covering 52-95 (QGGGGWGQPHGGGWGQPHGGGWGQPHGGGWGQPHGGGWGQGGGT) has biased composition (gly residues). Cu(2+) contacts are provided by His61, Gly62, Gly63, His69, Gly70, Gly71, His77, Gly78, Gly79, His85, Gly86, and Gly87. Residues Cys179 and Cys214 are joined by a disulfide bond. Residues Asn181 and Asn197 are each glycosylated (N-linked (GlcNAc...) asparagine). Ser230 is lipidated: GPI-anchor amidated serine. A propeptide spans 231–253 (SMVFFSSPPVILLISFLIFLIVG) (removed in mature form).

It belongs to the prion family. In terms of assembly, monomer and homodimer. Has a tendency to aggregate into amyloid fibrils containing a cross-beta spine, formed by a steric zipper of superposed beta-strands. Soluble oligomers may represent an intermediate stage on the path to fibril formation. Copper binding may promote oligomerization. Interacts with GRB2, APP, ERI3/PRNPIP and SYN1. Mislocalized cytosolically exposed PrP interacts with MGRN1; this interaction alters MGRN1 subcellular location and causes lysosomal enlargement. Interacts with KIAA1191.

The protein localises to the cell membrane. It is found in the golgi apparatus. Its function is as follows. Its primary physiological function is unclear. Has cytoprotective activity against internal or environmental stresses. May play a role in neuronal development and synaptic plasticity. May be required for neuronal myelin sheath maintenance. May play a role in iron uptake and iron homeostasis. Soluble oligomers are toxic to cultured neuroblastoma cells and induce apoptosis (in vitro). Association with GPC1 (via its heparan sulfate chains) targets PRNP to lipid rafts. Also provides Cu(2+) or Zn(2+) for the ascorbate-mediated GPC1 deaminase degradation of its heparan sulfate side chains. This Trachypithecus francoisi (Francois' leaf monkey) protein is Major prion protein (PRNP).